The chain runs to 156 residues: MFNVVLVEPEIPPNTGNVIRLCANTGARLHLIEPLGFPLDDAKMRRAGLDYHEYAQMRVHRDWDAFVAAEAPDPARMFAFTTRGSGRFHDRAFEPGDWFVFGAETRGLAPALVDRFAPEQRVRLPMRPGNRSLNLSNTVAVVVFEAWRQAGFEGGA.

Residues G102, L124, and S132 each contribute to the S-adenosyl-L-methionine site.

This sequence belongs to the class IV-like SAM-binding methyltransferase superfamily. RNA methyltransferase TrmH family. TrmL subfamily. In terms of assembly, homodimer.

Its subcellular location is the cytoplasm. The catalysed reaction is cytidine(34) in tRNA + S-adenosyl-L-methionine = 2'-O-methylcytidine(34) in tRNA + S-adenosyl-L-homocysteine + H(+). It carries out the reaction 5-carboxymethylaminomethyluridine(34) in tRNA(Leu) + S-adenosyl-L-methionine = 5-carboxymethylaminomethyl-2'-O-methyluridine(34) in tRNA(Leu) + S-adenosyl-L-homocysteine + H(+). Methylates the ribose at the nucleotide 34 wobble position in the two leucyl isoacceptors tRNA(Leu)(CmAA) and tRNA(Leu)(cmnm5UmAA). Catalyzes the methyl transfer from S-adenosyl-L-methionine to the 2'-OH of the wobble nucleotide. The sequence is that of tRNA (cytidine(34)-2'-O)-methyltransferase from Burkholderia pseudomallei (strain 1106a).